The sequence spans 273 residues: Zinc finger protein 80 (273 aa).

C2H2-type zinc fingers lie at residues 49 to 71 (YKCK…HQIH) and 77 to 99 (YECQ…MRIH). Residues 105-127 (CKCVECGKVFNRRSHLLCYRQIH) form a C2H2-type 3; atypical zinc finger. C2H2-type zinc fingers lie at residues 133–155 (YECS…RMTH), 161–183 (FGCK…MKIH), 189–211 (YKCG…SMTH), and 217–239 (YECK…TRSH).

The protein belongs to the krueppel C2H2-type zinc-finger protein family.

The protein localises to the nucleus. Functionally, may be involved in transcriptional regulation. The polypeptide is Zinc finger protein 80 (ZNF80) (Gorilla gorilla gorilla (Western lowland gorilla)).